A 236-amino-acid polypeptide reads, in one-letter code: Nopaline transport system permease protein NocQ (236 aa).

The 202-residue stretch at 21 to 222 (AMMTVVVAAC…LLSSVSNRGF (202 aa)) folds into the ABC transmembrane type-1 domain. 4 consecutive transmembrane segments (helical) span residues 25-45 (VVVAACSYFFGIIFGSLFAAA), 63-83 (VVRGVPELLIIFLVFFGGGTL), 102-122 (IFVIGVLCISVSAGAYATEVI), and 199-219 (QPFTFYITAFVIFLLLSSVSN).

This sequence belongs to the binding-protein-dependent transport system permease family. HisMQ subfamily.

It localises to the cell inner membrane. In terms of biological role, component of the nopaline active transport system probably consisting of four subunits: Q, M, P and T. This system is also capable of transporting octopine provided that catabolic functions are induced with nopaline. In Agrobacterium fabrum (strain C58 / ATCC 33970) (Agrobacterium tumefaciens (strain C58)), this protein is Nopaline transport system permease protein NocQ (nocQ).